The primary structure comprises 220 residues: Octanoyltransferase (220 aa).

The region spanning 27–208 is the BPL/LPL catalytic domain; the sequence is PGTADEIWLC…QLARAHGQAV (182 aa). Residues 66–73, 139–141, and 152–154 contribute to the substrate site; these read RGGQVTYH, ALG, and GLA. C170 serves as the catalytic Acyl-thioester intermediate.

This sequence belongs to the LipB family.

It localises to the cytoplasm. It carries out the reaction octanoyl-[ACP] + L-lysyl-[protein] = N(6)-octanoyl-L-lysyl-[protein] + holo-[ACP] + H(+). It functions in the pathway protein modification; protein lipoylation via endogenous pathway; protein N(6)-(lipoyl)lysine from octanoyl-[acyl-carrier-protein]: step 1/2. Catalyzes the transfer of endogenously produced octanoic acid from octanoyl-acyl-carrier-protein onto the lipoyl domains of lipoate-dependent enzymes. Lipoyl-ACP can also act as a substrate although octanoyl-ACP is likely to be the physiological substrate. The protein is Octanoyltransferase of Bordetella bronchiseptica (strain ATCC BAA-588 / NCTC 13252 / RB50) (Alcaligenes bronchisepticus).